A 256-amino-acid polypeptide reads, in one-letter code: Small ribosomal subunit protein uS3 (256 aa).

The 73-residue stretch at 39–111 (IREFLNENFS…EVILNIIEVR (73 aa)) folds into the KH type-2 domain. Residues 219–256 (DTRKPFEAGNQKRGQKRRPRNDQPGQRPQQRNRNSKED) are disordered. Residues 240 to 250 (DQPGQRPQQRN) show a composition bias toward low complexity.

The protein belongs to the universal ribosomal protein uS3 family. Part of the 30S ribosomal subunit. Forms a tight complex with proteins S10 and S14.

In terms of biological role, binds the lower part of the 30S subunit head. Binds mRNA in the 70S ribosome, positioning it for translation. This chain is Small ribosomal subunit protein uS3, found in Acholeplasma laidlawii (strain PG-8A).